The sequence spans 143 residues: Histone H2B (143 aa).

The tract at residues 1-52 (MAPKPASTAGKAPASTASKAPVKSDAAKTASKSKVSSGADGEKKKRKKTRKE) is disordered. Residue lysine 11 is modified to N6-acetyllysine; alternate. Residue lysine 11 forms a Glycyl lysine isopeptide (Lys-Gly) (interchain with G-Cter in SUMO); alternate linkage. Serine 15 is subject to Phosphoserine. The residue at position 19 (lysine 19) is an N6-acetyllysine. The span at 23–39 (KSDAAKTASKSKVSSGA) shows a compositional bias: low complexity. Lysine 137 participates in a covalent cross-link: Glycyl lysine isopeptide (Lys-Gly) (interchain with G-Cter in ubiquitin).

It belongs to the histone H2B family. The nucleosome is a histone octamer containing two molecules each of H2A, H2B, H3 and H4 assembled in one H3-H4 heterotetramer and two H2A-H2B heterodimers. The octamer wraps approximately 147 bp of DNA. In terms of processing, monoubiquitinated to form H2BK123ub1. H2BK123ub1 gives a specific tag for epigenetic transcriptional activation and is also prerequisite for H3K4me and H3K79me formation. H2BK123ub1 also modulates the formation of double-strand breaks during meiosis and is a prerequisite for DNA-damage checkpoint activation. Phosphorylated to form H2BS10ph during progression through meiotic prophase. May be correlated with chromosome condensation. Post-translationally, acetylation of N-terminal lysines and particularly formation of H2BK11ac has a positive effect on transcription. In terms of processing, sumoylation to form H2BK6su occurs preferentially near the telomeres and represses gene transcription.

It is found in the nucleus. Its subcellular location is the chromosome. Its function is as follows. Core component of nucleosome. Nucleosomes wrap and compact DNA into chromatin, limiting DNA accessibility to the cellular machineries which require DNA as a template. Histones thereby play a central role in transcription regulation, DNA repair, DNA replication and chromosomal stability. DNA accessibility is regulated via a complex set of post-translational modifications of histones, also called histone code, and nucleosome remodeling. In Agaricus bisporus (White button mushroom), this protein is Histone H2B (htbA).